A 260-amino-acid chain; its full sequence is 5'-nucleotidase SurE (260 aa).

A divalent metal cation contacts are provided by Asp-10, Asp-11, Ser-41, and Asn-95.

Belongs to the SurE nucleotidase family. Requires a divalent metal cation as cofactor.

Its subcellular location is the cytoplasm. The enzyme catalyses a ribonucleoside 5'-phosphate + H2O = a ribonucleoside + phosphate. Nucleotidase that shows phosphatase activity on nucleoside 5'-monophosphates. This chain is 5'-nucleotidase SurE, found in Methanoregula boonei (strain DSM 21154 / JCM 14090 / 6A8).